The following is a 1028-amino-acid chain: Multidrug resistance protein MdtC (1028 aa).

12 helical membrane-spanning segments follow: residues 3–23 (FFAL…AITL), 333–353 (EVEQ…FLFL), 360–380 (LIPA…MYLC), 387–407 (LSLM…IVVL), 431–451 (VGFT…PLLL), 463–483 (FAVT…TLTP), 528–548 (LVGV…ISIP), 853–873 (VILI…LYES), 875–895 (VHPL…LLAL), 897–917 (LFNA…IGIV), 953–973 (PIMM…ISGG), and 984–1004 (ITIV…TPVV).

It belongs to the resistance-nodulation-cell division (RND) (TC 2.A.6) family. MdtC subfamily. Part of a tripartite efflux system composed of MdtA, MdtB and MdtC. MdtC forms a heteromultimer with MdtB.

It is found in the cell inner membrane. This chain is Multidrug resistance protein MdtC, found in Citrobacter koseri (strain ATCC BAA-895 / CDC 4225-83 / SGSC4696).